The chain runs to 295 residues: UDP-N-acetylenolpyruvoylglucosamine reductase (295 aa).

The FAD-binding PCMH-type domain occupies 24–188 (KVGGNAEIFF…LKAVFKINKG (165 aa)). Arg168 is an active-site residue. The active-site Proton donor is the Ser217. Glu287 is a catalytic residue.

The protein belongs to the MurB family. It depends on FAD as a cofactor.

The protein resides in the cytoplasm. It catalyses the reaction UDP-N-acetyl-alpha-D-muramate + NADP(+) = UDP-N-acetyl-3-O-(1-carboxyvinyl)-alpha-D-glucosamine + NADPH + H(+). It functions in the pathway cell wall biogenesis; peptidoglycan biosynthesis. Cell wall formation. The sequence is that of UDP-N-acetylenolpyruvoylglucosamine reductase from Rickettsia massiliae (strain Mtu5).